Here is a 469-residue protein sequence, read N- to C-terminus: uncharacterized protein (469 aa).

Residues 11–65 are a coiled coil; the sequence is LFISVAFSQESVEDLKRLLEEYKKKIQEIERRLEELEKAKKEEEKKKEAVALKPT.

This is an uncharacterized protein from Aquifex aeolicus (strain VF5).